Consider the following 126-residue polypeptide: Fumarate reductase subunit C (126 aa).

3 helical membrane passes run 30–50 (IFVAWFVLYLVLVLRAVGAGG), 64–84 (VVVVLNVVALSFLLLHAVTWF), and 105–125 (VLAGHYAAWLVVSVIVAWMVL).

Belongs to the FrdC family. As to quaternary structure, part of an enzyme complex containing four subunits: a flavoprotein (FrdA), an iron-sulfur protein (FrdB), and two hydrophobic anchor proteins (FrdC and FrdD).

It localises to the cell membrane. Its function is as follows. Anchors the catalytic components of the fumarate reductase complex to the cell membrane, binds quinones. The polypeptide is Fumarate reductase subunit C (Mycobacterium tuberculosis (strain CDC 1551 / Oshkosh)).